Reading from the N-terminus, the 628-residue chain is uncharacterized protein (628 aa).

Belongs to the IucA/IucC family.

This is an uncharacterized protein from Sinorhizobium fredii (strain NBRC 101917 / NGR234).